The primary structure comprises 342 residues: L-threonine 3-dehydrogenase (342 aa).

Cys-38 contributes to the Zn(2+) binding site. Active-site charge relay system residues include Thr-40 and His-43. His-63, Glu-64, Cys-93, Cys-96, Cys-99, and Cys-107 together coordinate Zn(2+). NAD(+) is bound by residues Ile-175, Asp-195, Arg-200, 262-264 (LGI), and 286-287 (IY).

It belongs to the zinc-containing alcohol dehydrogenase family. In terms of assembly, homotetramer. Requires Zn(2+) as cofactor.

It localises to the cytoplasm. It carries out the reaction L-threonine + NAD(+) = (2S)-2-amino-3-oxobutanoate + NADH + H(+). It participates in amino-acid degradation; L-threonine degradation via oxydo-reductase pathway; glycine from L-threonine: step 1/2. Functionally, catalyzes the NAD(+)-dependent oxidation of L-threonine to 2-amino-3-ketobutyrate. In Aeromonas hydrophila subsp. hydrophila (strain ATCC 7966 / DSM 30187 / BCRC 13018 / CCUG 14551 / JCM 1027 / KCTC 2358 / NCIMB 9240 / NCTC 8049), this protein is L-threonine 3-dehydrogenase.